Reading from the N-terminus, the 896-residue chain is Translation initiation factor IF-2 (896 aa).

The segment covering 93–219 (VKRDPQEAER…RMAEENEKNW (127 aa)) has biased composition (basic and acidic residues). The tract at residues 93-307 (VKRDPQEAER…GSALQQGFQK (215 aa)) is disordered. Basic residues predominate over residues 256 to 271 (GRSRSSKAARPAKKGN). The span at 272–285 (KHAESKADREEARA) shows a compositional bias: basic and acidic residues. The tr-type G domain occupies 395–564 (PRAPVVTIMG…LLQAEVLELK (170 aa)). A G1 region spans residues 404-411 (GHVDHGKT). A GTP-binding site is contributed by 404-411 (GHVDHGKT). The interval 429-433 (GITQH) is G2. Positions 450–453 (DTPG) are G3. GTP contacts are provided by residues 450–454 (DTPGH) and 504–507 (NKID). The G4 stretch occupies residues 504–507 (NKID). The interval 540 to 542 (SAK) is G5.

It belongs to the TRAFAC class translation factor GTPase superfamily. Classic translation factor GTPase family. IF-2 subfamily.

It is found in the cytoplasm. Its function is as follows. One of the essential components for the initiation of protein synthesis. Protects formylmethionyl-tRNA from spontaneous hydrolysis and promotes its binding to the 30S ribosomal subunits. Also involved in the hydrolysis of GTP during the formation of the 70S ribosomal complex. The protein is Translation initiation factor IF-2 of Klebsiella pneumoniae (strain 342).